Here is a 78-residue protein sequence, read N- to C-terminus: Small ribosomal subunit protein uS17 (78 aa).

It belongs to the universal ribosomal protein uS17 family. In terms of assembly, part of the 30S ribosomal subunit.

Its function is as follows. One of the primary rRNA binding proteins, it binds specifically to the 5'-end of 16S ribosomal RNA. The protein is Small ribosomal subunit protein uS17 of Sinorhizobium fredii (strain NBRC 101917 / NGR234).